A 788-amino-acid polypeptide reads, in one-letter code: Protein translocase subunit SecA 2 (788 aa).

ATP-binding positions include Gln86, 104-108 (GEGKT), and Asp493.

The protein belongs to the SecA family. In terms of assembly, monomer and homodimer. Part of the essential Sec protein translocation apparatus which comprises SecA, SecYEG and auxiliary proteins SecDF. Other proteins may also be involved.

The protein resides in the cell membrane. It is found in the cytoplasm. It carries out the reaction ATP + H2O + cellular proteinSide 1 = ADP + phosphate + cellular proteinSide 2.. Its function is as follows. Part of the Sec protein translocase complex. Interacts with the SecYEG preprotein conducting channel. Has a central role in coupling the hydrolysis of ATP to the transfer of proteins into and across the cell membrane, serving as an ATP-driven molecular motor driving the stepwise translocation of polypeptide chains across the membrane. The sequence is that of Protein translocase subunit SecA 2 from Bacillus thuringiensis (strain Al Hakam).